A 437-amino-acid polypeptide reads, in one-letter code: Glutamyl-tRNA reductase (437 aa).

Residues 49–52, S109, 114–116, and Q120 each bind substrate; these read TCNR and EVQ. Catalysis depends on C50, which acts as the Nucleophile. 189-194 provides a ligand contact to NADP(+); the sequence is GAGDTA.

It belongs to the glutamyl-tRNA reductase family. As to quaternary structure, homodimer.

The catalysed reaction is (S)-4-amino-5-oxopentanoate + tRNA(Glu) + NADP(+) = L-glutamyl-tRNA(Glu) + NADPH + H(+). It participates in porphyrin-containing compound metabolism; protoporphyrin-IX biosynthesis; 5-aminolevulinate from L-glutamyl-tRNA(Glu): step 1/2. Its pathway is porphyrin-containing compound metabolism; chlorophyll biosynthesis. Its function is as follows. Catalyzes the NADPH-dependent reduction of glutamyl-tRNA(Glu) to glutamate 1-semialdehyde (GSA). The polypeptide is Glutamyl-tRNA reductase (Chloroherpeton thalassium (strain ATCC 35110 / GB-78)).